The primary structure comprises 852 residues: Lon protease homolog 2, peroxisomal (852 aa).

Serine 2 is subject to N-acetylserine. In terms of domain architecture, Lon N-terminal spans 13 to 222; it reads LPLLLTHEGV…MTIPLLVRQI (210 aa). An ATP-binding site is contributed by 375 to 382; sequence GPPGVGKT. Residues 651 to 837 form the Lon proteolytic domain; sequence LSQPGVAIGL…DEVLNAAFDG (187 aa). Active-site residues include serine 743 and lysine 786. Residues 850-852 carry the Microbody targeting signal motif; sequence SKL.

This sequence belongs to the peptidase S16 family. In terms of assembly, interacts with PEX5. Interacts with TYSND1. May interact with enzymes involved in beta-oxidation of fatty acids, including ACOX1/AOX.

Its subcellular location is the peroxisome matrix. It catalyses the reaction Hydrolysis of proteins in presence of ATP.. ATP-dependent serine protease that mediates the selective degradation of misfolded and unassembled polypeptides in the peroxisomal matrix. Necessary for type 2 peroxisome targeting signal (PTS2)-containing protein processing and facilitates peroxisome matrix protein import. May indirectly regulate peroxisomal fatty acid beta-oxidation through degradation of the self-processed forms of TYSND1. The protein is Lon protease homolog 2, peroxisomal of Bos taurus (Bovine).